The sequence spans 178 residues: MGDPRRLGKKYDTPNHPWIGERIQKEREISQKYGLVNKKELWKMETQLRNYRRQARKLISDTTTQGGKEAVQLFNVLKRYAILVEQEPTLDHVLSLDIESILERRLQTIVYRKGLAKTAKQARQFIVHGHIAVNGKRVTAPAYLVSVAENDAIEYVPNSPMASENHPERTAAVSEENQ.

The S4 RNA-binding domain occupies 104–166; the sequence is RRLQTIVYRK…PNSPMASENH (63 aa). The tract at residues 158–178 is disordered; it reads NSPMASENHPERTAAVSEENQ.

Belongs to the universal ribosomal protein uS4 family. Part of the 30S ribosomal subunit. Contacts protein S5. The interaction surface between S4 and S5 is involved in control of translational fidelity.

Functionally, one of the primary rRNA binding proteins, it binds directly to 16S rRNA where it nucleates assembly of the body of the 30S subunit. With S5 and S12 plays an important role in translational accuracy. This is Small ribosomal subunit protein uS4 from Methanococcus maripaludis (strain C6 / ATCC BAA-1332).